Here is a 209-residue protein sequence, read N- to C-terminus: Thiamine-phosphate synthase (209 aa).

Residues 39–43 and asparagine 71 each bind 4-amino-2-methyl-5-(diphosphooxymethyl)pyrimidine; that span reads QLREK. 2 residues coordinate Mg(2+): aspartate 72 and aspartate 91. Residue serine 110 participates in 4-amino-2-methyl-5-(diphosphooxymethyl)pyrimidine binding. A 2-[(2R,5Z)-2-carboxy-4-methylthiazol-5(2H)-ylidene]ethyl phosphate-binding site is contributed by 136–138; the sequence is TGT. Lysine 139 is a binding site for 4-amino-2-methyl-5-(diphosphooxymethyl)pyrimidine. Residues glycine 166 and 186 to 187 contribute to the 2-[(2R,5Z)-2-carboxy-4-methylthiazol-5(2H)-ylidene]ethyl phosphate site; that span reads VS.

It belongs to the thiamine-phosphate synthase family. It depends on Mg(2+) as a cofactor.

It catalyses the reaction 2-[(2R,5Z)-2-carboxy-4-methylthiazol-5(2H)-ylidene]ethyl phosphate + 4-amino-2-methyl-5-(diphosphooxymethyl)pyrimidine + 2 H(+) = thiamine phosphate + CO2 + diphosphate. The enzyme catalyses 2-(2-carboxy-4-methylthiazol-5-yl)ethyl phosphate + 4-amino-2-methyl-5-(diphosphooxymethyl)pyrimidine + 2 H(+) = thiamine phosphate + CO2 + diphosphate. The catalysed reaction is 4-methyl-5-(2-phosphooxyethyl)-thiazole + 4-amino-2-methyl-5-(diphosphooxymethyl)pyrimidine + H(+) = thiamine phosphate + diphosphate. It functions in the pathway cofactor biosynthesis; thiamine diphosphate biosynthesis; thiamine phosphate from 4-amino-2-methyl-5-diphosphomethylpyrimidine and 4-methyl-5-(2-phosphoethyl)-thiazole: step 1/1. In terms of biological role, condenses 4-methyl-5-(beta-hydroxyethyl)thiazole monophosphate (THZ-P) and 2-methyl-4-amino-5-hydroxymethyl pyrimidine pyrophosphate (HMP-PP) to form thiamine monophosphate (TMP). The chain is Thiamine-phosphate synthase from Clostridium beijerinckii (strain ATCC 51743 / NCIMB 8052) (Clostridium acetobutylicum).